The primary structure comprises 236 residues: Urease accessory protein UreF (236 aa).

This sequence belongs to the UreF family. As to quaternary structure, ureD, UreF and UreG form a complex that acts as a GTP-hydrolysis-dependent molecular chaperone, activating the urease apoprotein by helping to assemble the nickel containing metallocenter of UreC. The UreE protein probably delivers the nickel.

The protein localises to the cytoplasm. Functionally, required for maturation of urease via the functional incorporation of the urease nickel metallocenter. The protein is Urease accessory protein UreF of Synechocystis sp. (strain ATCC 27184 / PCC 6803 / Kazusa).